The chain runs to 612 residues: Large ribosomal subunit assembly factor BipA (612 aa).

Residues 5–200 (NDLRNIAIIA…TIIKHVPAPV (196 aa)) form the tr-type G domain. GTP contacts are provided by residues 17-22 (DHGKTT) and 130-133 (NKID).

The protein belongs to the TRAFAC class translation factor GTPase superfamily. Classic translation factor GTPase family. BipA subfamily. As to quaternary structure, monomer.

The protein resides in the cytoplasm. It carries out the reaction GTP + H2O = GDP + phosphate + H(+). In terms of biological role, a 50S ribosomal subunit assembly protein with GTPase activity, required for 50S subunit assembly at low temperatures, may also play a role in translation. Binds GTP and analogs. Binds the 70S ribosome between the 30S and 50S subunits, in a similar position as ribosome-bound EF-G; it contacts a number of ribosomal proteins, both rRNAs and the A-site tRNA. The protein is Large ribosomal subunit assembly factor BipA of Bacillus subtilis (strain 168).